Consider the following 443-residue polypeptide: CBL-interacting protein kinase 29 (443 aa).

Residues 32 to 292 (YELGGLLGRG…TEEIITHPWF (261 aa)) enclose the Protein kinase domain. ATP contacts are provided by residues 38 to 46 (LGRGASAKV) and lysine 61. Aspartate 164 (proton acceptor) is an active-site residue. Residues 182 to 207 (DFGLGAVADGALHHTLCGTPAYVAPE) form an activation loop region. The NAF domain occupies 313–347 (AKFKTEFKEDDMARDMTAFDILACSPGSDLSGLFG). The tract at residues 350 to 379 (PGKERVFVGEPAAAVLSRVEEAGKKEGYMV) is PPI.

It belongs to the protein kinase superfamily. CAMK Ser/Thr protein kinase family. SNF1 subfamily. Mn(2+) serves as cofactor.

It carries out the reaction L-seryl-[protein] + ATP = O-phospho-L-seryl-[protein] + ADP + H(+). The catalysed reaction is L-threonyl-[protein] + ATP = O-phospho-L-threonyl-[protein] + ADP + H(+). In terms of biological role, CIPK serine-threonine protein kinases interact with CBL proteins. Binding of a CBL protein to the regulatory NAF domain of CIPK protein lead to the activation of the kinase in a calcium-dependent manner. This chain is CBL-interacting protein kinase 29 (CIPK29), found in Oryza sativa subsp. japonica (Rice).